A 105-amino-acid polypeptide reads, in one-letter code: Pyrimidine/purine nucleoside phosphorylase (105 aa).

It belongs to the nucleoside phosphorylase PpnP family.

The enzyme catalyses a purine D-ribonucleoside + phosphate = a purine nucleobase + alpha-D-ribose 1-phosphate. The catalysed reaction is adenosine + phosphate = alpha-D-ribose 1-phosphate + adenine. It catalyses the reaction cytidine + phosphate = cytosine + alpha-D-ribose 1-phosphate. It carries out the reaction guanosine + phosphate = alpha-D-ribose 1-phosphate + guanine. The enzyme catalyses inosine + phosphate = alpha-D-ribose 1-phosphate + hypoxanthine. The catalysed reaction is thymidine + phosphate = 2-deoxy-alpha-D-ribose 1-phosphate + thymine. It catalyses the reaction uridine + phosphate = alpha-D-ribose 1-phosphate + uracil. It carries out the reaction xanthosine + phosphate = alpha-D-ribose 1-phosphate + xanthine. Functionally, catalyzes the phosphorolysis of diverse nucleosides, yielding D-ribose 1-phosphate and the respective free bases. Can use uridine, adenosine, guanosine, cytidine, thymidine, inosine and xanthosine as substrates. Also catalyzes the reverse reactions. The sequence is that of Pyrimidine/purine nucleoside phosphorylase from Albidiferax ferrireducens (strain ATCC BAA-621 / DSM 15236 / T118) (Rhodoferax ferrireducens).